A 589-amino-acid chain; its full sequence is Mini-chromosome maintenance complex-binding protein (589 aa).

The tract at residues Val163 to Ala211 is disordered. The span at Ala193 to Gly207 shows a compositional bias: polar residues.

This sequence belongs to the MCMBP family. As to quaternary structure, interacts with the MCM complex.

It localises to the nucleus. Functionally, associated component of the MCM complex that acts as a regulator of DNA replication. Binds to the MCM complex during late S phase and may act by promoting the disassembly of the MCM complex from chromatin. Required for sister chromatid cohesion. The protein is Mini-chromosome maintenance complex-binding protein (ETG1) of Arabidopsis thaliana (Mouse-ear cress).